Consider the following 533-residue polypeptide: tRNA(Ile)-lysidine synthase (533 aa).

An ATP-binding site is contributed by 21–26 (SGGADS). The region spanning 377-500 (DLLDTAMGEA…DLLSSHWGHV (124 aa)) is the CMP/dCMP-type deaminase domain.

The protein belongs to the tRNA(Ile)-lysidine synthase family.

The protein localises to the cytoplasm. It catalyses the reaction cytidine(34) in tRNA(Ile2) + L-lysine + ATP = lysidine(34) in tRNA(Ile2) + AMP + diphosphate + H(+). Functionally, ligates lysine onto the cytidine present at position 34 of the AUA codon-specific tRNA(Ile) that contains the anticodon CAU, in an ATP-dependent manner. Cytidine is converted to lysidine, thus changing the amino acid specificity of the tRNA from methionine to isoleucine. This Deinococcus deserti (strain DSM 17065 / CIP 109153 / LMG 22923 / VCD115) protein is tRNA(Ile)-lysidine synthase.